The sequence spans 430 residues: tRNA(Ile)-lysidine synthase (430 aa).

21 to 26 provides a ligand contact to ATP; the sequence is SGGLDS.

The protein belongs to the tRNA(Ile)-lysidine synthase family.

It is found in the cytoplasm. It catalyses the reaction cytidine(34) in tRNA(Ile2) + L-lysine + ATP = lysidine(34) in tRNA(Ile2) + AMP + diphosphate + H(+). Functionally, ligates lysine onto the cytidine present at position 34 of the AUA codon-specific tRNA(Ile) that contains the anticodon CAU, in an ATP-dependent manner. Cytidine is converted to lysidine, thus changing the amino acid specificity of the tRNA from methionine to isoleucine. This is tRNA(Ile)-lysidine synthase from Salmonella choleraesuis (strain SC-B67).